The following is a 187-amino-acid chain: Adenylate kinase (187 aa).

An ATP-binding site is contributed by 10–15 (GSGKGT). Positions 30–59 (STGDMLRAEIAAGSELGKQAKAVMDAGNLV) are NMP. Residues Thr31, Arg36, 57-59 (NLV), 85-88 (GYPR), and Gln92 contribute to the AMP site. The segment at 126-136 (GRAKEQGRADD) is LID. Arg127 contributes to the ATP binding site. Arg133 and Arg144 together coordinate AMP. Gly172 contacts ATP.

It belongs to the adenylate kinase family. As to quaternary structure, monomer.

Its subcellular location is the cytoplasm. It catalyses the reaction AMP + ATP = 2 ADP. The protein operates within purine metabolism; AMP biosynthesis via salvage pathway; AMP from ADP: step 1/1. In terms of biological role, catalyzes the reversible transfer of the terminal phosphate group between ATP and AMP. Plays an important role in cellular energy homeostasis and in adenine nucleotide metabolism. This is Adenylate kinase from Stenotrophomonas maltophilia (strain R551-3).